The primary structure comprises 335 residues: MVRRDRLRRMREWWVQVGLLAVPLLAAYLHIPPPQLSPALHSWKSSGKFFTYKGLRIFYQDSVGVVGSPEIVVLLHGFPTSSYDWYKIWEGLTLSFHRVIALDFLGFGFSDKPRPHHYSIFEQASIVEALLRHLGLQSRRINLLSHDYGDTVAQELLYRFKQNRSGRLTIKSLCLSNGGIFPETHRPLLLQKLLKDGGMLSPILTRLMNFFVFSRGLTPVFGPYTRPSESELWDMWAGIRNNDGNLVIDSLLQYINQRKKFRRRWVGALASVSIPIHFIYGPLDPVNPYPEFLELYRKTLPRSTVSILDDHISHYPQLEDPMGFLNAYMGFINSF.

The next 3 helical transmembrane spans lie at 13 to 33 (WWVQVGLLAVPLLAAYLHIPP), 88 to 108 (IWEGLTLSFHRVIALDFLGFG), and 266 to 286 (VGALASVSIPIHFIYGPLDPV). The AB hydrolase-1 domain maps to 71 to 310 (IVVLLHGFPT…PRSTVSILDD (240 aa)). The RVIALD signature appears at 98–103 (RVIALD).

Belongs to the AB hydrolase superfamily. In terms of tissue distribution, no detectable transcripts during preimplantation development. Isoform 1 was not detected in either in vitro-matured oocytes (IVF) or parthenogenetically activated (PA) blastocyst. Isoform 2 was expressed in IVF and PA blastocysts.

It localises to the endoplasmic reticulum membrane. The sequence is that of Mesoderm-specific transcript homolog protein (MEST) from Bos taurus (Bovine).